A 150-amino-acid chain; its full sequence is 1,4-dihydroxy-2-naphthoyl-CoA hydrolase (150 aa).

Residue aspartate 19 is part of the active site.

The protein belongs to the 4-hydroxybenzoyl-CoA thioesterase family. DHNA-CoA hydrolase subfamily.

It carries out the reaction 1,4-dihydroxy-2-naphthoyl-CoA + H2O = 1,4-dihydroxy-2-naphthoate + CoA + H(+). The protein operates within cofactor biosynthesis; phylloquinone biosynthesis. It participates in quinol/quinone metabolism; 1,4-dihydroxy-2-naphthoate biosynthesis; 1,4-dihydroxy-2-naphthoate from chorismate: step 7/7. Catalyzes the hydrolysis of 1,4-dihydroxy-2-naphthoyl-CoA (DHNA-CoA) to 1,4-dihydroxy-2-naphthoate (DHNA), a reaction involved in phylloquinone (vitamin K1) biosynthesis. The sequence is that of 1,4-dihydroxy-2-naphthoyl-CoA hydrolase from Prochlorococcus marinus subsp. pastoris (strain CCMP1986 / NIES-2087 / MED4).